Consider the following 466-residue polypeptide: Ribulose bisphosphate carboxylase large chain (466 aa).

N6,N6,N6-trimethyllysine is present on Lys-5. Asn-114 and Thr-164 together coordinate substrate. The Proton acceptor role is filled by Lys-166. Lys-168 is a substrate binding site. Residues Lys-192, Asp-194, and Glu-195 each coordinate Mg(2+). An N6-carboxylysine modification is found at Lys-192. His-285 functions as the Proton acceptor in the catalytic mechanism. 3 residues coordinate substrate: Arg-286, His-318, and Ser-370.

The protein belongs to the RuBisCO large chain family. Type I subfamily. Heterohexadecamer of 8 large chains and 8 small chains; disulfide-linked. The disulfide link is formed within the large subunit homodimers. The cofactor is Mg(2+). The disulfide bond which can form in the large chain dimeric partners within the hexadecamer appears to be associated with oxidative stress and protein turnover.

The protein resides in the plastid. The protein localises to the chloroplast. The catalysed reaction is 2 (2R)-3-phosphoglycerate + 2 H(+) = D-ribulose 1,5-bisphosphate + CO2 + H2O. It carries out the reaction D-ribulose 1,5-bisphosphate + O2 = 2-phosphoglycolate + (2R)-3-phosphoglycerate + 2 H(+). Its function is as follows. RuBisCO catalyzes two reactions: the carboxylation of D-ribulose 1,5-bisphosphate, the primary event in carbon dioxide fixation, as well as the oxidative fragmentation of the pentose substrate in the photorespiration process. Both reactions occur simultaneously and in competition at the same active site. This chain is Ribulose bisphosphate carboxylase large chain, found in Aesculus pavia (Red buckeye).